The primary structure comprises 212 residues: MSEEKIPLIGEKFPEMEVITTHGKIKLPDYYQGKWFVLFSHPGDFTPVCTTEFYSFAKKYEEFKKLNTELIGLSVDSNISHIEWVMWIEKNLKVEIPFPIIADPMGNVAKRLGMIHAESSTSTVRAVFIVDDKGIVRLIMYYPMEIGRNIDEILRSIRALQLVDKSGVVIPANWPNNELIGNKVINPPPRTVKDAKLRINQPFDWWFTYKEI.

Positions 7 to 162 constitute a Thioredoxin domain; it reads PLIGEKFPEM…ILRSIRALQL (156 aa). Cys49 serves as the catalytic Cysteine sulfenic acid (-SOH) intermediate. Residue Arg125 participates in substrate binding.

The protein belongs to the peroxiredoxin family. Prx6 subfamily. Homodecamer. Pentamer of dimers that assemble into a ring structure.

It localises to the cytoplasm. It carries out the reaction a hydroperoxide + [thioredoxin]-dithiol = an alcohol + [thioredoxin]-disulfide + H2O. Functionally, thiol-specific peroxidase that catalyzes the reduction of hydrogen peroxide and organic hydroperoxides to water and alcohols, respectively. Plays a role in cell protection against oxidative stress by detoxifying peroxides. The sequence is that of Peroxiredoxin 2 from Sulfurisphaera tokodaii (strain DSM 16993 / JCM 10545 / NBRC 100140 / 7) (Sulfolobus tokodaii).